A 427-amino-acid chain; its full sequence is MKRRKRGRGIVNADRISQLPEALIIQILSLLPTEVAVTTSVLSKQWQFLWKMLPKLNFDSLDQRHEFKTFSKNVKRALLSHKAPVLHSLHLIVHLHLCNSMNTAKLIGIAFACNLRKLVLEVDGGRFSIPESLYNCETLDTLELKYSILMDVPSSICLKSLRTLHLHYVDFKDNESALNLLSGCPNLENLVVHRYPFSSVKTYTIAVSSLKRLTIYTSSTVDPRAGYVINSPSLTYLKIVGQIGFCLIENVPELVEASMIVSSQIINKNLLESLTSVKRLFLEFSPLMIKFPAGSIFYQLVYLELLTHEAECLNLLTLMLNSSPKLQILKLLSPKYQSWKKDVVGKWNKPKIVPECLLFHLETFMWKGYEWKRNDETEVAKYILSNTNRLKRATFFSKPISSEERVKMVKNLNSVVRALNSCQLLIK.

Positions 13–61 (ADRISQLPEALIIQILSLLPTEVAVTTSVLSKQWQFLWKMLPKLNFDSL) constitute an F-box domain. LRR repeat units lie at residues 67–93 (FKTFSKNVKRALLSHKAPVLHSLHLIV), 98–122 (CNSMNTAKLIGIAFACNLRKLVLEV), 141–168 (TLELKYSILMDVPSSICLKSLRTLHLHY), 169–194 (VDFKDNESALNLLSGCPNLENLVVHR), 213–241 (LTIYTSSTVDPRAGYVINSPSLTYLKIVG), and 258–284 (SMIVSSQIINKNLLESLTSVKRLFLEF). The FBD domain maps to 346 to 396 (KWNKPKIVPECLLFHLETFMWKGYEWKRNDETEVAKYILSNTNRLKRATFF).

The sequence is that of Putative F-box/FBD/LRR-repeat protein At4g13965 from Arabidopsis thaliana (Mouse-ear cress).